The sequence spans 347 residues: Cannabinoid receptor 2 (347 aa).

The Extracellular portion of the chain corresponds to 1 to 33 (MEGCRETEVTNGSNGGLEFNPMKEYMILSSGQQ). N-linked (GlcNAc...) asparagine glycosylation occurs at asparagine 11. A helical transmembrane segment spans residues 34–59 (IAVAVLCTLMGLLSALENMAVLYIIL). Over 60 to 71 (SSRRLRRKPSYL) the chain is Cytoplasmic. Residues 72-92 (FISSLAGADFLASVIFACNFV) traverse the membrane as a helical segment. The Extracellular portion of the chain corresponds to 93–104 (IFHVFHGVDSNA). The helical transmembrane segment at 105 to 129 (IFLLKIGSVTMTFTASVGSLLLTAV) threads the bilayer. Residues 130 to 149 (DRYLCLCYPPTYKALVTRGR) are Cytoplasmic-facing. Residues 150-172 (ALVALCVMWVLSALISYLPLMGW) form a helical membrane-spanning segment. The Extracellular portion of the chain corresponds to 173–188 (TCCPSPCSELFPLIPN). The helical transmembrane segment at 189–214 (DYLLGWLLFIAILFSGIIYTYGYVLW) threads the bilayer. The Cytoplasmic portion of the chain corresponds to 215–246 (KAHRHVATLAEHQDRQVPGIARMRLDVRLAKT). The chain crosses the membrane as a helical span at residues 247-267 (LGLVLAVLLICWFPALALMGH). The Extracellular portion of the chain corresponds to 268–279 (SLVTTLSDQVKE). Residues 280–301 (AFAFCSMLCLVNSMVNPIIYAL) form a helical membrane-spanning segment. Topologically, residues 302–347 (RSGEIRSAAQHCLIGWKKYLQGLGPEGKEEGPRSSVTETEADVKTT) are cytoplasmic. Residues 326-347 (PEGKEEGPRSSVTETEADVKTT) are disordered. Serine 335 and serine 336 each carry phosphoserine. Threonine 338 is subject to Phosphothreonine.

The protein belongs to the G-protein coupled receptor 1 family. Expressed by cells of hematopoietic origin. Expressed in skin in suprabasal layers and hair follicles, in brain by neurons and glial cells and by osteoblasts, osteocytes, osteoclasts (at protein level).

The protein resides in the cell membrane. It localises to the cell projection. Its subcellular location is the dendrite. It is found in the perikaryon. In terms of biological role, heterotrimeric G protein-coupled receptor for endocannabinoid 2-arachidonoylglycerol mediating inhibition of adenylate cyclase. May function in inflammatory response, nociceptive transmission and bone homeostasis. The polypeptide is Cannabinoid receptor 2 (Cnr2) (Mus musculus (Mouse)).